Here is a 124-residue protein sequence, read N- to C-terminus: Large ribosomal subunit protein uL18 (124 aa).

It belongs to the universal ribosomal protein uL18 family. In terms of assembly, part of the 50S ribosomal subunit; part of the 5S rRNA/L5/L18/L25 subcomplex. Contacts the 5S and 23S rRNAs.

Its function is as follows. This is one of the proteins that bind and probably mediate the attachment of the 5S RNA into the large ribosomal subunit, where it forms part of the central protuberance. In Aquifex pyrophilus, this protein is Large ribosomal subunit protein uL18.